Here is a 366-residue protein sequence, read N- to C-terminus: DNA integrity scanning protein DisA (366 aa).

The 139-residue stretch at 21-159 (VHTLKGTLQR…EGKAHMLEQP (139 aa)) folds into the DAC domain. Residues Gly88, Leu106, and 119–123 (TRHRS) each bind ATP.

It belongs to the DisA family. In terms of assembly, homooctamer. Mg(2+) serves as cofactor.

It carries out the reaction 2 ATP = 3',3'-c-di-AMP + 2 diphosphate. In terms of biological role, participates in a DNA-damage check-point. DisA forms globular foci that rapidly scan along the chromosomes searching for lesions. Also has diadenylate cyclase activity, catalyzing the condensation of 2 ATP molecules into cyclic di-AMP (c-di-AMP). c-di-AMP likely acts as a signaling molecule that may couple DNA integrity with a cellular process. In Corynebacterium glutamicum (strain R), this protein is DNA integrity scanning protein DisA.